Consider the following 186-residue polypeptide: Probable GTP-binding protein EngB (186 aa).

The region spanning 18-186 (DKVEICFIGR…LKKLLASEFK (169 aa)) is the EngB-type G domain. GTP contacts are provided by residues 26–33 (GRSNVGKS), 52–56 (GRTQL), 70–73 (DLPG), 137–140 (TKID), and 166–168 (VSS). Residues S33 and T54 each coordinate Mg(2+).

It belongs to the TRAFAC class TrmE-Era-EngA-EngB-Septin-like GTPase superfamily. EngB GTPase family. Mg(2+) is required as a cofactor.

Its function is as follows. Necessary for normal cell division and for the maintenance of normal septation. The protein is Probable GTP-binding protein EngB of Mycoplasmopsis pulmonis (strain UAB CTIP) (Mycoplasma pulmonis).